A 129-amino-acid chain; its full sequence is Small ribosomal subunit protein uS11 (129 aa).

This sequence belongs to the universal ribosomal protein uS11 family. As to quaternary structure, part of the 30S ribosomal subunit. Interacts with proteins S7 and S18. Binds to IF-3.

Its function is as follows. Located on the platform of the 30S subunit, it bridges several disparate RNA helices of the 16S rRNA. Forms part of the Shine-Dalgarno cleft in the 70S ribosome. This is Small ribosomal subunit protein uS11 from Azoarcus sp. (strain BH72).